A 465-amino-acid chain; its full sequence is uncharacterized protein (465 aa).

Helical transmembrane passes span 19–39 (VLGP…GEYM), 50–70 (MIAG…VAMI), 91–111 (IVGP…YTML), 140–160 (FIVL…LATL), 164–184 (LVIT…VQFG), 201–221 (PYGW…YLGI), 244–264 (AGIM…SGLM), 288–308 (LMVL…NGCI), 342–362 (IVFL…DQVV), 363–383 (TFSI…MVMF), and 403–423 (LPTV…FLGY).

This sequence belongs to the amino acid-polyamine-organocation (APC) superfamily.

The protein resides in the cell membrane. Its function is as follows. Probable amino-acid or metabolite transport protein. This is an uncharacterized protein from Rhizobium meliloti (strain 1021) (Ensifer meliloti).